Consider the following 346-residue polypeptide: B3 domain-containing protein At3g25182 (346 aa).

Residues 168-187 are disordered; sequence KRRAVEQRKRTGGVKKAKVA. Residues 237–338 constitute a DNA-binding region (TF-B3); sequence FNNLLRNDFL…ILCFAMEQRS (102 aa).

Its subcellular location is the nucleus. The chain is B3 domain-containing protein At3g25182 from Arabidopsis thaliana (Mouse-ear cress).